The chain runs to 436 residues: Proline transporter 3 (436 aa).

Helical transmembrane passes span 29–49, 52–72, 118–138, 151–171, 172–192, 216–236, 254–274, 296–316, 345–365, 366–386, and 405–425; these read SWFQAAFVLTTSINSAYVLGY, TVMVPLGWIGGVVGLILATAI, LFMINCGFIILAGSALKAVYV, FIAIAGLICAVFAIGIPHLSA, LGIWLAVSTILSLIYIVVAIV, LFTITGAAATLVFVFNTGMLP, LYFQFTVGVLPMFAVVFIGYW, ALANISAILQSVISLHIFASP, GGYIAVSTLLSALLPFLGDFM, SLTGAVSTFPLTFILANHMYY, and VVFFSLMSVAAAIAALRLIAL.

This sequence belongs to the amino acid/polyamine transporter 2 family. Amino acid/auxin permease (AAAP) (TC 2.A.18.3) subfamily. In terms of tissue distribution, expressed in epidermal cells of leaves, sepals and petals.

The protein localises to the cell membrane. Functionally, proline transporter that mediates proline and glycine betaine transport. When expressed in a heterologous system (yeast), imports L-proline, glycine betaine and GABA across the plasma membrane. In Arabidopsis thaliana (Mouse-ear cress), this protein is Proline transporter 3 (PROT3).